Reading from the N-terminus, the 224-residue chain is Casparian strip membrane protein 3 (224 aa).

The segment at 1–30 (MESKKEGVASAPTSPESRRTRSNGKGKTIA) is disordered. The Cytoplasmic portion of the chain corresponds to 1–57 (MESKKEGVASAPTSPESRRTRSNGKGKTIAEATPPSVTVVSTKVTPSPRGGWRKGAA). The chain crosses the membrane as a helical span at residues 58 to 78 (ILDFILRLGAISSAIGAAAVM). Over 79–105 (GNNEQILPFFTQFFQFHVQWDDFPMFQ) the chain is Extracellular. The chain crosses the membrane as a helical span at residues 106-126 (FFVFANGAAVVFLILSLPFSI). At 127-138 (VCIVRPFAVGPR) the chain is on the cytoplasmic side. The helical transmembrane segment at 139–159 (LLLVIVDIFAMALVIAAASAA) threads the bilayer. Residues 160–191 (AAVVYLAHNGSQDANWIAICQQYTDFCQVTSQ) are Extracellular-facing. Asparagine 168 is a glycosylation site (N-linked (GlcNAc...) asparagine). A helical membrane pass occupies residues 192-212 (AVVASFVAAVFLICLIVLSSV). At 213-224 (ALKKGLKREFGW) the chain is on the cytoplasmic side.

The protein belongs to the Casparian strip membrane proteins (CASP) family. Homodimer and heterodimers.

It is found in the cell membrane. Regulates membrane-cell wall junctions and localized cell wall deposition. Required for establishment of the Casparian strip membrane domain (CSD) and the subsequent formation of Casparian strips, a cell wall modification of the root endodermis that determines an apoplastic barrier between the intraorganismal apoplasm and the extraorganismal apoplasm and prevents lateral diffusion. The sequence is that of Casparian strip membrane protein 3 from Vigna unguiculata (Cowpea).